The primary structure comprises 96 residues: Large ribosomal subunit protein bL27 (96 aa).

Residues Met1–Phe11 constitute a propeptide that is removed on maturation. The segment at His13–Ala36 is disordered.

It belongs to the bacterial ribosomal protein bL27 family. Post-translationally, the N-terminus is cleaved by ribosomal processing cysteine protease Prp.

This chain is Large ribosomal subunit protein bL27, found in Streptococcus thermophilus (strain CNRZ 1066).